The sequence spans 187 residues: Structural protein ORF187 (187 aa).

A helical membrane pass occupies residues 65–85 (IYQPTAIAVSGVGGIIGALLA).

The protein localises to the host membrane. It localises to the virion. The polypeptide is Structural protein ORF187 (Acidianus two-tailed virus (ATV)).